Consider the following 106-residue polypeptide: MKSFFVVALLVAAAAAAPANPDADAVIVRYDADQGDPQHYSYSVETSNGIAFSEEGALKNVGSENEANSVRGSYAYVGPDGVTYSVVYIADENGFQPQGAHLPVAA.

An N-terminal signal peptide occupies residues methionine 1–alanine 16. The Chitin-binding type R&amp;R domain occupies proline 37–alanine 106.

In terms of biological role, component of the cuticle of tobacco hornworm. The chain is Cuticle protein CP14.6 (CP14.6) from Manduca sexta (Tobacco hawkmoth).